Here is a 241-residue protein sequence, read N- to C-terminus: Biosynthetic peptidoglycan transglycosylase (241 aa).

A helical transmembrane segment spans residues glycine 18–valine 38.

It belongs to the glycosyltransferase 51 family.

It is found in the cell inner membrane. The enzyme catalyses [GlcNAc-(1-&gt;4)-Mur2Ac(oyl-L-Ala-gamma-D-Glu-L-Lys-D-Ala-D-Ala)](n)-di-trans,octa-cis-undecaprenyl diphosphate + beta-D-GlcNAc-(1-&gt;4)-Mur2Ac(oyl-L-Ala-gamma-D-Glu-L-Lys-D-Ala-D-Ala)-di-trans,octa-cis-undecaprenyl diphosphate = [GlcNAc-(1-&gt;4)-Mur2Ac(oyl-L-Ala-gamma-D-Glu-L-Lys-D-Ala-D-Ala)](n+1)-di-trans,octa-cis-undecaprenyl diphosphate + di-trans,octa-cis-undecaprenyl diphosphate + H(+). Its pathway is cell wall biogenesis; peptidoglycan biosynthesis. Functionally, peptidoglycan polymerase that catalyzes glycan chain elongation from lipid-linked precursors. The sequence is that of Biosynthetic peptidoglycan transglycosylase from Yersinia pseudotuberculosis serotype IB (strain PB1/+).